We begin with the raw amino-acid sequence, 407 residues long: Tyrosine--tRNA ligase 1 (407 aa).

Tyr-35 serves as a coordination point for L-tyrosine. A 'HIGH' region motif is present at residues 40–49; sequence PTGDSLHVGH. L-tyrosine-binding residues include Tyr-168 and Gln-172. The 'KMSKS' region signature appears at 228-232; it reads KMGKT. Residue Lys-231 participates in ATP binding. The S4 RNA-binding domain maps to 340–406; the sequence is SSILDVLVHT…GKKKYYKIVI (67 aa).

Belongs to the class-I aminoacyl-tRNA synthetase family. TyrS type 1 subfamily. As to quaternary structure, homodimer.

The protein localises to the cytoplasm. The catalysed reaction is tRNA(Tyr) + L-tyrosine + ATP = L-tyrosyl-tRNA(Tyr) + AMP + diphosphate + H(+). Functionally, catalyzes the attachment of tyrosine to tRNA(Tyr) in a two-step reaction: tyrosine is first activated by ATP to form Tyr-AMP and then transferred to the acceptor end of tRNA(Tyr). In Clostridium acetobutylicum (strain ATCC 824 / DSM 792 / JCM 1419 / IAM 19013 / LMG 5710 / NBRC 13948 / NRRL B-527 / VKM B-1787 / 2291 / W), this protein is Tyrosine--tRNA ligase 1.